The sequence spans 108 residues: Protein RnfH (108 aa).

Positions alanine 86–alanine 108 are disordered.

It belongs to the UPF0125 (RnfH) family.

The polypeptide is Protein RnfH (Pseudoalteromonas atlantica (strain T6c / ATCC BAA-1087)).